The primary structure comprises 424 residues: Zona pellucida sperm-binding protein 3 (424 aa).

A signal peptide spans methionine 1 to proline 22. Residue glutamine 23 is modified to Pyrrolidone carboxylic acid. The Extracellular segment spans residues glutamine 23–valine 387. Residues glutamate 45–asparagine 307 enclose the ZP domain. 2 disulfide bridges follow: cysteine 46/cysteine 140 and cysteine 78/cysteine 99. Asparagine 125 and asparagine 147 each carry an N-linked (GlcNAc...) asparagine glycan. O-linked (GalNAc...) threonine glycans are attached at residues threonine 156, threonine 162, and threonine 163. Cystine bridges form between cysteine 217/cysteine 282 and cysteine 239/cysteine 300. A glycan (N-linked (GlcNAc...) asparagine) is linked at asparagine 272. A disordered region spans residues proline 330–glutamate 356. Positions arginine 351–glutamate 424 are cleaved as a propeptide — removed in mature form. A helical transmembrane segment spans residues valine 388–valine 408. Residues leucine 409–glutamate 424 lie on the Cytoplasmic side of the membrane.

It belongs to the ZP domain family. ZPC subfamily. As to quaternary structure, polymers of ZP2 and ZP3 organized into long filaments cross-linked by ZP1 homodimers. Interacts with ZP1 and ZP2. In terms of processing, proteolytically cleaved before the transmembrane segment to yield the secreted ectodomain incorporated in the zona pellucida. Post-translationally, N-glycosylated. O-glycosylated; removal of O-linked glycans may play an important role in the post-fertilization block to polyspermy. Expressed in oocytes (at protein level).

It is found in the zona pellucida. It localises to the cell membrane. Functionally, component of the zona pellucida, an extracellular matrix surrounding oocytes which mediates sperm binding, induction of the acrosome reaction and prevents post-fertilization polyspermy. The zona pellucida is composed of 3 to 4 glycoproteins, ZP1, ZP2, ZP3, and ZP4. ZP3 is essential for sperm binding and zona matrix formation. This chain is Zona pellucida sperm-binding protein 3 (ZP3), found in Homo sapiens (Human).